A 125-amino-acid polypeptide reads, in one-letter code: Antitoxin MazE5 (125 aa).

Forms a complex with cognate toxin MazF5.

Antitoxin component of a type II toxin-antitoxin (TA) system. Upon expression in M.smegmatis neutralizes the effect of cognate toxin MazF5. This is Antitoxin MazE5 (mazE5) from Mycobacterium tuberculosis (strain ATCC 25618 / H37Rv).